The sequence spans 642 residues: Terminase, large subunit (642 aa).

Residues M1–P48 are interaction with the terminase small subunit. The Q motif signature appears at K42 to W51. The short motif at K76–T83 is the Walker A motif element. Positions N166–L353 are DNA packaging/ATPase. Positions V174–E179 match the Walker B motif motif. The For ATPase activity role is filled by E179. Position 401 (D401) interacts with Mg(2+). The tract at residues D401–E587 is endonuclease. ATP is bound at residue G491–P498. A basic region spans residues K574–R585. The interval L589–R617 is leucine zipper. Residues A611–R642 form a prohead binding region.

The protein belongs to the lambdavirus large terminase family. As to quaternary structure, heterotrimer of two small and one large terminase subunits. The catalytically competent terminase is composed of a tetramer of heterotrimers. The tetramer forms a ring structure large enough to encircle duplex DNA. Host IHFA/IHFB induces bending of viral DNA to facilitate the assembly of the terminase tetramer of heterotrimers. Interacts (via N-terminus) with the terminase small subunit (via C-terminus). Interacts (via C-terminus) with the portal protein; this interaction allows the packaging of viral DNA. Mg(2+) serves as cofactor.

Its subcellular location is the host cytoplasm. The enzyme catalyses Endonucleolytic cleavage of DNA to give specific double-stranded fragments with terminal 5'-phosphates.. Its function is as follows. The terminase large subunit acts as an ATP driven molecular motor necessary for viral DNA translocation into empty capsids and as an endonuclease that cuts the viral genome from the concetamer to initiate and to end the packaging reaction. The terminase lies at a unique vertex of the procapsid and is composed of two subunits, a small terminase subunit involved in viral DNA recognition (binding to packaging sequence cos), and a large terminase subunit possessing endonucleolytic and ATPase activities (DNA maturation and packaging). The terminase binds cooperatively with the host factor IHFA/IHFB to the cos site at the junction of adjacent viral genomes. The endonuclease activity cleaves the viral DNA generating 5'overhangs of 12 bp in length. The strand separation activity separates the cohesive ends generating the single-stranded 'sticky' ends of the mature genome. IHFA/IHFB is also necessary for the strand separation activity of the terminase. The terminase remains bound to the left end of the genome to be packaged, forming a stable DNA-terminase complex. In a reaction facilitated by the viral assembly catalyst gpFI, the DNA-terminase complex binds to the portal of the procapsid thereby activating the translocase activity of the terminase. The terminase packages the viral DNA into the procapsid until the next cos site on the concatemer reaches the complex. The downstream cos site is then cut generating the mature right end of the genome, the heterotrimer undocks from the DNA-filled head and remains bound to the left end of concatemer's next genome. The protein is Terminase, large subunit (2) of Escherichia coli (Bacteriophage 21).